A 64-amino-acid chain; its full sequence is Large ribosomal subunit protein bL35 (64 aa).

Residues 1-28 form a disordered region; sequence MPKMKTHSGAKKRFKLTGSGKLKRQQAN.

This sequence belongs to the bacterial ribosomal protein bL35 family.

In Renibacterium salmoninarum (strain ATCC 33209 / DSM 20767 / JCM 11484 / NBRC 15589 / NCIMB 2235), this protein is Large ribosomal subunit protein bL35.